A 120-amino-acid chain; its full sequence is Lysozyme (120 aa).

A C-type lysozyme domain is found at 1-120; sequence KRFTRCGLVN…NHSNPDISSC (120 aa). 4 cysteine pairs are disulfide-bonded: Cys-6–Cys-120, Cys-27–Cys-110, Cys-62–Cys-76, and Cys-72–Cys-90. Active-site residues include Glu-32 and Asp-50.

Belongs to the glycosyl hydrolase 22 family. In terms of assembly, monomer.

It carries out the reaction Hydrolysis of (1-&gt;4)-beta-linkages between N-acetylmuramic acid and N-acetyl-D-glucosamine residues in a peptidoglycan and between N-acetyl-D-glucosamine residues in chitodextrins.. Lysozymes have primarily a bacteriolytic function; those in tissues and body fluids are associated with the monocyte-macrophage system and enhance the activity of immunoagents. The polypeptide is Lysozyme (Antheraea mylitta (Tasar silkworm)).